The sequence spans 294 residues: Osteopontin (294 aa).

The signal sequence occupies residues 1–16 (MRLAVICFCLFGIASS). Ser-24, Ser-26, Ser-27, Ser-61, Ser-62, Ser-75, Ser-77, Ser-80, Ser-106, Ser-109, Ser-112, Ser-115, and Ser-118 each carry phosphoserine. The interval 42–274 (WLVPDPSQKQ…LVLDPKSKED (233 aa)) is disordered. The span at 48–61 (SQKQNLLAPQNAVS) shows a compositional bias: polar residues. Over residues 85-110 (DDDDDDDDDDGDHAESEDSVDSDESD) the composition is skewed to acidic residues. Polar residues predominate over residues 121-130 (TVTASTQADT). 3 O-linked (GalNAc...) threonine glycosylation sites follow: Thr-123, Thr-132, and Thr-137. The Cell attachment site signature appears at 144–146 (RGD). Phosphothreonine occurs at positions 170 and 175. Residues 174 to 187 (LTSHMKSGESKESL) are compositionally biased toward basic and acidic residues. Phosphoserine is present on residues Ser-176, Ser-180, Ser-200, Ser-209, Ser-213, and Ser-219. Positions 197–216 (SMPSDQDNNGKGSHESSQLD) are enriched in polar residues. O-linked (Xyl...) (chondroitin sulfate) serine glycosylation occurs at Ser-219. The span at 220–232 (LETHRLEHSKESQ) shows a compositional bias: basic and acidic residues. Residue Thr-222 is modified to Phosphothreonine. Residues Ser-228, Ser-231, Ser-234, Ser-238, Ser-243, Ser-247, Ser-250, Ser-255, Ser-260, Ser-271, Ser-283, Ser-288, Ser-290, and Ser-291 each carry the phosphoserine modification. Polar residues predominate over residues 234–249 (SADQSDVIDSQASSKA). Residues 263 to 274 (DKLVLDPKSKED) show a composition bias toward basic and acidic residues. Residue Ser-288 is glycosylated (O-linked (Xyl...) (chondroitin sulfate) serine).

Belongs to the osteopontin family. As to quaternary structure, interacts (via N-terminus) with integrin ITGA9:ITGB1. In terms of processing, extensively phosphorylated by FAM20C in the extracellular medium at multiple sites within the S-x-E/pS motif. The phosphorylated form inhibits hydroxyapatite crystallization. Dephosphorylation via a mechanism involving ALPL/TNAP promotes hydroxyapatite crystallization. Post-translationally, O-glycosylated. Forms covalent cross-links mediated by transglutaminase TGM2, between a glutamine and the epsilon-amino group of a lysine residue, forming homopolymers and heteropolymers, increasing its collagen binding properties.

The protein localises to the secreted. Functionally, major non-collagenous bone protein that binds tightly to hydroxyapatite. Appears to form an integral part of the mineralized matrix. Probably important to cell-matrix interaction. Acts as a cytokine involved in enhancing production of interferon-gamma and interleukin-12 and reducing production of interleukin-10 and is essential in the pathway that leads to type I immunity. This Mus musculus (Mouse) protein is Osteopontin (Spp1).